The primary structure comprises 229 residues: UPF0173 metal-dependent hydrolase SERP1270 (229 aa).

It belongs to the UPF0173 family.

The chain is UPF0173 metal-dependent hydrolase SERP1270 from Staphylococcus epidermidis (strain ATCC 35984 / DSM 28319 / BCRC 17069 / CCUG 31568 / BM 3577 / RP62A).